Consider the following 361-residue polypeptide: Cytochrome c peroxidase, mitochondrial (361 aa).

Residues 1–67 (MTTAVRLLPS…NWGKAAALAS (67 aa)) constitute a mitochondrion transit peptide. His-119 serves as the catalytic Proton acceptor. Phosphotyrosine is present on Tyr-220. His-242 serves as a coordination point for heme b. The active-site Tryptophan radical intermediate is Trp-258.

Belongs to the peroxidase family. Cytochrome c peroxidase subfamily. In terms of assembly, forms a one-to-one complex with cytochrome c. The cofactor is heme b. CCP1 precursor is processed by the rhomboid protease PCP1, which cleaves the N-terminal hydrophobic transit peptide. The m-AAA protease (composed of YTA12/RCA1 and YTA10/AFG3) is required for CCP1 maturation: m-AAA protease promotes membrane dislocation of the CCP1 transmembrane segment within the transit peptide to ensure the correct positioning of CCP1 within the membrane bilayer, allowing intramembrane cleavage by PCP1.

It is found in the mitochondrion matrix. It localises to the mitochondrion intermembrane space. The enzyme catalyses 2 Fe(II)-[cytochrome c] + H2O2 + 2 H(+) = 2 Fe(III)-[cytochrome c] + 2 H2O. Functionally, destroys radicals which are normally produced within the cells and which are toxic to biological systems. This is Cytochrome c peroxidase, mitochondrial (CCP1) from Saccharomyces cerevisiae (strain ATCC 204508 / S288c) (Baker's yeast).